The chain runs to 271 residues: Formamidopyrimidine-DNA glycosylase (271 aa).

The active-site Schiff-base intermediate with DNA is P2. Catalysis depends on E3, which acts as the Proton donor. Catalysis depends on K58, which acts as the Proton donor; for beta-elimination activity. 3 residues coordinate DNA: H91, R110, and R152. The FPG-type zinc-finger motif lies at 237-271; that stretch reads NVYGRGGKACKKCRKPLTEKKLGQRTTVYCTHCQK. R261 (proton donor; for delta-elimination activity) is an active-site residue.

Belongs to the FPG family. Monomer. Zn(2+) serves as cofactor.

The catalysed reaction is Hydrolysis of DNA containing ring-opened 7-methylguanine residues, releasing 2,6-diamino-4-hydroxy-5-(N-methyl)formamidopyrimidine.. It carries out the reaction 2'-deoxyribonucleotide-(2'-deoxyribose 5'-phosphate)-2'-deoxyribonucleotide-DNA = a 3'-end 2'-deoxyribonucleotide-(2,3-dehydro-2,3-deoxyribose 5'-phosphate)-DNA + a 5'-end 5'-phospho-2'-deoxyribonucleoside-DNA + H(+). In terms of biological role, involved in base excision repair of DNA damaged by oxidation or by mutagenic agents. Acts as a DNA glycosylase that recognizes and removes damaged bases. Has a preference for oxidized purines, such as 7,8-dihydro-8-oxoguanine (8-oxoG). Has AP (apurinic/apyrimidinic) lyase activity and introduces nicks in the DNA strand. Cleaves the DNA backbone by beta-delta elimination to generate a single-strand break at the site of the removed base with both 3'- and 5'-phosphates. The sequence is that of Formamidopyrimidine-DNA glycosylase from Saccharophagus degradans (strain 2-40 / ATCC 43961 / DSM 17024).